A 539-amino-acid chain; its full sequence is Chaperonin GroEL (539 aa).

ATP-binding positions include 30 to 33, K51, 87 to 91, G415, and D495; these read TLGP and DGTTT.

This sequence belongs to the chaperonin (HSP60) family. Forms a cylinder of 14 subunits composed of two heptameric rings stacked back-to-back. Interacts with the co-chaperonin GroES.

Its subcellular location is the cytoplasm. It catalyses the reaction ATP + H2O + a folded polypeptide = ADP + phosphate + an unfolded polypeptide.. Its function is as follows. Together with its co-chaperonin GroES, plays an essential role in assisting protein folding. The GroEL-GroES system forms a nano-cage that allows encapsulation of the non-native substrate proteins and provides a physical environment optimized to promote and accelerate protein folding. In Serratia rubidaea (Serratia marinorubra), this protein is Chaperonin GroEL.